The following is a 72-amino-acid chain: Lantibiotic Flvbeta.e (72 aa).

The propeptide at 1–34 (MNNKEFNMEQFKKLAAVVSEDELDEMLDENVTGA) is cleaved by FlvT. The lanthionine (Ser-Cys); by FlvM2 cross-link spans 36 to 40 (SSIPC). S37 bears the 2,3-didehydroalanine (Ser); by FlvM2 mark. A 2,3-didehydrobutyrine; by FlvM2 mark is found at T48 and T49. 3 consecutive cross-links (beta-methyllanthionine (Thr-Cys); by FlvM2) follow at residues 55-61 (TTGFDWC), 63-66 (TGAC), and 67-70 (TTSC).

Contains LL-lanthionine and DL-beta-methyllanthionine, when coepressed in E.coli with the flavecin synthetase FlvM2.

It localises to the secreted. Functionally, lanthionine-containing peptide antibiotic (lantibiotic) that is probably active on Gram-positive bacteria, since its analog [Del1]Flvbeta.e shows antibacterial activity against Gram-positive bacteria. This activity is not synergistically enhanced by [Del2]Flvalpha.a, an analog of Flvalpha.a, which is encoded by the same operon than Flvbeta.e. The bactericidal activity of lantibiotics is based on depolarization of energized bacterial cytoplasmic membranes, initiated by the formation of aqueous transmembrane pores. This is Lantibiotic Flvbeta.e from Ruminococcus flavefaciens.